A 55-amino-acid polypeptide reads, in one-letter code: MAKKTDTRIVINMACTDCGERNYTTEKNKRNDPRRIELSKYCPRCREAKVHRETK.

This sequence belongs to the bacterial ribosomal protein bL33 family.

This chain is Large ribosomal subunit protein bL33, found in Dehalococcoides mccartyi (strain ATCC BAA-2100 / JCM 16839 / KCTC 5957 / BAV1).